The primary structure comprises 220 residues: Chaperone protein TorD (220 aa).

It belongs to the TorD/DmsD family. TorD subfamily.

The protein localises to the cytoplasm. Functionally, involved in the biogenesis of TorA. Acts on TorA before the insertion of the molybdenum cofactor and, as a result, probably favors a conformation of the apoenzyme that is competent for acquiring the cofactor. The sequence is that of Chaperone protein TorD from Vibrio cholerae serotype O1 (strain ATCC 39315 / El Tor Inaba N16961).